The chain runs to 1220 residues: Limbin (1220 aa).

Residues 1-29 (MGATGPTGAGGRATWVLAGNILAAALVLG) form the signal peptide. Topologically, residues 30 to 210 (SGPRALPPSF…VLPNHGLHAA (181 aa)) are extracellular. The segment at 38 to 59 (SFPALGPGSPSRPGPAGPWASS) is disordered. Asn100, Asn109, and Asn130 each carry an N-linked (GlcNAc...) asparagine glycan. A helical transmembrane segment spans residues 211-231 (GFIAAFLISLLLTVAALFFLA). At 232–1220 (RGRCLQGGML…KKANRALGLD (989 aa)) the chain is on the cytoplasmic side. Coiled coils occupy residues 355–404 (EEYE…SAAE), 563–644 (KQKL…AALD), 854–875 (GELL…AESL), and 920–1005 (QILE…VREE).

As to quaternary structure, component of the EvC complex composed of EFCAB7, IQCE, EVC2 and EVC; built from two subcomplexes, EVC2:EVC and EFCAB7:IQCE. Interacts with EVC. Interacts (via N-terminal end) with EFCAB7. Interacts (via N-terminal end) with IQCE. Expressed in long and cranial bones, kidney and heart. Strongly expressed in proliferating chondrocytes, osteoblasts and osteoclasts.

It is found in the cell membrane. It localises to the cytoplasm. The protein localises to the cytoskeleton. The protein resides in the cilium basal body. Its subcellular location is the cell projection. It is found in the cilium. It localises to the cilium membrane. The protein localises to the nucleus. In terms of biological role, component of the EvC complex that positively regulates ciliary Hedgehog (Hh) signaling. Plays a critical role in bone formation and skeletal development. May be involved in early embryonic morphogenesis. This is Limbin (Evc2) from Mus musculus (Mouse).